A 392-amino-acid chain; its full sequence is tRNA-specific 2-thiouridylase MnmA (392 aa).

ATP contacts are provided by residues 18–25 (GMSGGVDS) and M44. The interval 104–106 (NPD) is interaction with target base in tRNA. Residue C109 is the Nucleophile of the active site. C109 and C208 are disulfide-bonded. G133 lines the ATP pocket. An interaction with tRNA region spans residues 158–160 (KDQ). The Cysteine persulfide intermediate role is filled by C208. An interaction with tRNA region spans residues 320–321 (RY).

Belongs to the MnmA/TRMU family.

It is found in the cytoplasm. The enzyme catalyses S-sulfanyl-L-cysteinyl-[protein] + uridine(34) in tRNA + AH2 + ATP = 2-thiouridine(34) in tRNA + L-cysteinyl-[protein] + A + AMP + diphosphate + H(+). In terms of biological role, catalyzes the 2-thiolation of uridine at the wobble position (U34) of tRNA, leading to the formation of s(2)U34. The protein is tRNA-specific 2-thiouridylase MnmA of Marinobacter nauticus (strain ATCC 700491 / DSM 11845 / VT8) (Marinobacter aquaeolei).